The primary structure comprises 227 residues: Probable GTP-binding protein EngB (227 aa).

One can recognise an EngB-type G domain in the interval 13–188; sequence IGLEVAFAGR…AGVMGNWYEY (176 aa). GTP is bound by residues 21 to 28, 48 to 52, 67 to 70, 134 to 137, and 167 to 169; these read GRSNAGKS, GRTQM, DLPG, TKAD, and FSA. Positions 28 and 50 each coordinate Mg(2+).

Belongs to the TRAFAC class TrmE-Era-EngA-EngB-Septin-like GTPase superfamily. EngB GTPase family. Mg(2+) serves as cofactor.

Functionally, necessary for normal cell division and for the maintenance of normal septation. In Psychrobacter cryohalolentis (strain ATCC BAA-1226 / DSM 17306 / VKM B-2378 / K5), this protein is Probable GTP-binding protein EngB.